The primary structure comprises 609 residues: Granule-bound starch synthase 1, chloroplastic/amyloplastic (609 aa).

The N-terminal 77 residues, 1-77 (MSALTTSQLA…SRRFPSVVVY (77 aa)), are a transit peptide targeting the chloroplast. The tract at residues 29–67 (RHGFQGLKPRSPAGGDATSLSVTTSARATPKQQRSVQRG) is disordered. The span at 46 to 66 (TSLSVTTSARATPKQQRSVQR) shows a compositional bias: polar residues. Lysine 97 provides a ligand contact to ADP-alpha-D-glucose. 5 residues coordinate ADP: glycine 100, arginine 408, lysine 413, lysine 462, and glutamine 493. An intrachain disulfide couples cysteine 337 to cysteine 529.

Belongs to the glycosyltransferase 1 family. Bacterial/plant glycogen synthase subfamily.

It is found in the plastid. The protein resides in the chloroplast. The protein localises to the amyloplast. It carries out the reaction an NDP-alpha-D-glucose + [(1-&gt;4)-alpha-D-glucosyl](n) = [(1-&gt;4)-alpha-D-glucosyl](n+1) + a ribonucleoside 5'-diphosphate + H(+). The protein operates within glycan biosynthesis; starch biosynthesis. Required for the synthesis of amylose in endosperm. This Oryza sativa subsp. indica (Rice) protein is Granule-bound starch synthase 1, chloroplastic/amyloplastic (WAXY).